The primary structure comprises 49 residues: Large ribosomal subunit protein bL33 (49 aa).

Belongs to the bacterial ribosomal protein bL33 family.

This is Large ribosomal subunit protein bL33 from Clostridium beijerinckii (strain ATCC 51743 / NCIMB 8052) (Clostridium acetobutylicum).